The chain runs to 335 residues: Calcium-binding protein TgpCaBP (335 aa).

The chain crosses the membrane as a helical span at residues L30–A50. EF-hand domains lie at M113 to Q148, Q153 to E188, L190 to N225, and V227 to H262. D126, D128, D130, K132, E137, D166, D168, D170, E177, D203, N205, D207, K209, E214, D240, N242, D244, and E251 together coordinate Ca(2+). A Prevents secretion from ER motif is present at residues H332–L335.

Its subcellular location is the endoplasmic reticulum membrane. It is found in the cytoplasm. It localises to the cytosol. In terms of biological role, calcium-binding protein. Participates in the efflux of intracellular Ca(2+) and storage of Ca(2+) in the endoplasmic reticulum. Required for gliding, host cell invasion and egress. Required for microneme secretion. The chain is Calcium-binding protein TgpCaBP from Toxoplasma gondii.